A 501-amino-acid polypeptide reads, in one-letter code: Cytochrome P450 2J6 (501 aa).

Cysteine 447 lines the heme pocket.

This sequence belongs to the cytochrome P450 family. Heme is required as a cofactor.

It localises to the endoplasmic reticulum membrane. The protein localises to the microsome membrane. It catalyses the reaction an organic molecule + reduced [NADPH--hemoprotein reductase] + O2 = an alcohol + oxidized [NADPH--hemoprotein reductase] + H2O + H(+). This Mus musculus (Mouse) protein is Cytochrome P450 2J6 (Cyp2j6).